The chain runs to 1357 residues: MSEFHRLYFDELLFDFPDLVKVQKDSYASFVGGGDTGFSISDIFASVFPVNDGYGRASLEFVSCRMGEPKHDEYGCVERGITYSAPLRAILRLVVFGDETSGEGSEGVSTEPAVKDVREQEIYMGDIPIMSKNGTFIINGVERVVVSQMHRAPGVFFDNDKARSISGKLNYIARIIPYRGSWLDFEFDAKDVLYFRIDKKRKLPVTFLLRALGLSNKDIFAQFCEVSECRLTKDGKWTVCFVPEKFKGVRLQYDLINAETGELVLAKGNRISIVLARNLYAKGLRYCYMDLEVMKDMYLADDLVSTKGEVLLPHGTKLTKEHVAKLEFLDVDSIKLVELKGNYVFSTVLQYDCSYEEAMLSIYRVVRPGEIPSVESAEKLFESLFFSPERYDLLNVGRIRLNAKFNLSHDESLTVLTKEDIFCTVKELALLQREVGDVDDIDHLGNRRVRSVGEFMDNQFRIGLVRMAKVIVENMATADFDTVMPCEMINSKILGAVIREFFMSSALSQFMDQTNPLSEITHKRRISALGPGGLNRGRAGFEVRDVHTTHYGRICATETPEGATIGLINSLAIYAKINKYGFIETPYRYVRDGRVTDEVTYLSAIDEIKANICQASVRVDEEGYIVDDLVYCRRNYENVFIPRSEVQFADVSAKQIVSVAASLIPFLENDDANRALMGSNMQRQAVPLIMPEAPLVGTGMEGYVARGSGAVIVAKRAGVVQYIDARNIVVASESKDDFWIDSYTLCKFRKSNHNTCIHQRCVVHQGQRVKKGDILADGPAIQKGELALGRNLVVAFLSWRGYNFEDSVVISSNVVRDDLFTSVHLEGFECVVRDTRLGPEEITRDVSGVAEEFLHCLDEFGIACVGANVEAGDVLVGKVTPKSSSPVTPEEKLLRAIFGEKAIDVKDSSLYLPPGVSGCVVDVKVLQRRGIEKVGRALLIEKQAIDAEKTRRDHELAVLTNYIYSLLKEMLVGKVALSTLAPISKGDLITEEALEKIDRENWWKISVDGISSIKLLRQRFVDRFDEINKTYEENFEKIRGDDDLAQGVLMVVKVFVAVKHTLQPGDKMSGRHGNKGVISRIVPAEDTPYLADGTPVDIILNPLGVPSRMNVGQILETHLGWAAYNLGKKISKLLDEGNYSEVKSLVLEIYKNDRKMMARLNEMTDAEIVEYSRSLRGGVPVAASVFEGPKTDEIERLLVLAGKDPSGQEVLYDGVTGEKFDRKVTVGCKYMLKLHHLVNDKIHARSIGSTVDTQQPLGGKSHFGGQRFGEMECWALQAYGATFALQEMLTIKSDDVVGRVNVYDSIVRGDNDFYYGVPESFNVMMNELRALCLNVEFCSDLEKKKDFGDLALAASGQ.

It belongs to the RNA polymerase beta chain family. As to quaternary structure, the RNAP catalytic core consists of 2 alpha, 1 beta, 1 beta' and 1 omega subunit. When a sigma factor is associated with the core the holoenzyme is formed, which can initiate transcription.

It catalyses the reaction RNA(n) + a ribonucleoside 5'-triphosphate = RNA(n+1) + diphosphate. DNA-dependent RNA polymerase catalyzes the transcription of DNA into RNA using the four ribonucleoside triphosphates as substrates. This chain is DNA-directed RNA polymerase subunit beta, found in Neorickettsia sennetsu (Ehrlichia sennetsu).